The primary structure comprises 196 residues: NADH-quinone oxidoreductase subunit B (196 aa).

Residues cysteine 63, cysteine 64, cysteine 129, and cysteine 159 each contribute to the [4Fe-4S] cluster site.

This sequence belongs to the complex I 20 kDa subunit family. As to quaternary structure, NDH-1 is composed of 14 different subunits. Subunits NuoB, C, D, E, F, and G constitute the peripheral sector of the complex. Requires [4Fe-4S] cluster as cofactor.

The protein resides in the cell inner membrane. The enzyme catalyses a quinone + NADH + 5 H(+)(in) = a quinol + NAD(+) + 4 H(+)(out). Its function is as follows. NDH-1 shuttles electrons from NADH, via FMN and iron-sulfur (Fe-S) centers, to quinones in the respiratory chain. The immediate electron acceptor for the enzyme in this species is believed to be a menaquinone. Couples the redox reaction to proton translocation (for every two electrons transferred, four hydrogen ions are translocated across the cytoplasmic membrane), and thus conserves the redox energy in a proton gradient. This chain is NADH-quinone oxidoreductase subunit B, found in Bacteroides fragilis (strain ATCC 25285 / DSM 2151 / CCUG 4856 / JCM 11019 / LMG 10263 / NCTC 9343 / Onslow / VPI 2553 / EN-2).